Here is a 242-residue protein sequence, read N- to C-terminus: UPF0246 protein SPN23F15130 (242 aa).

The protein belongs to the UPF0246 family.

This Streptococcus pneumoniae (strain ATCC 700669 / Spain 23F-1) protein is UPF0246 protein SPN23F15130.